The sequence spans 361 residues: G2/mitotic-specific cyclin-B (361 aa).

The protein belongs to the cyclin family. Cyclin AB subfamily.

Its function is as follows. Essential for the control of the cell cycle at the G2/M (mitosis) transition. Interacts with the CDC2 protein kinase to form MPF. G2/M cyclins accumulate steadily during G2 and are abruptly destroyed at mitosis. In Hydra vulgaris (Hydra), this protein is G2/mitotic-specific cyclin-B.